Consider the following 227-residue polypeptide: Max dimerization protein 1 (227 aa).

Residues 21-48 carry the Nuclear localization signal motif; the sequence is RREREAEHGYASMLPYSKDRDAFKRRNK. 3 disordered regions span residues 30–66, 142–161, and 184–227; these read YASM…MEKN, MDSV…REEL, and GWSS…GLGL. The 53-residue stretch at 55-107 folds into the bHLH domain; that stretch reads SSRSTHNEMEKNRRAHLRLCLEKLKGLVPLGPESSRHTTLSLLTKAKLHIKKL. Positions 198-211 are enriched in polar residues; sequence MQSLGSDEGYSSAT. A compositionally biased stretch (basic and acidic residues) spans 216 to 227; that stretch reads KLQDGHKAGLGL.

Heterodimer with MAX; the interaction is required for DNA-binding. DNA binding requires dimerization with another bHLH protein; does not form homodimers, and does not bind to DNA in the absence of MAX in vitro. Interacts with RNF17. Ubiquitinated by BIRC2/c-IAP1, leading to its subsequent degradation by the proteasome.

Its subcellular location is the nucleus. Its function is as follows. Component of a transcriptional repressor complex together with MAX. In complex with MAX binds to the core DNA sequence 5'-CAC[GA]TG-3'. Antagonizes MYC transcriptional activity by competing with MYC for MAX binding. Binds to the TERT promoter and represses telomerase expression, possibly by interfering with MYC binding. In Mus musculus (Mouse), this protein is Max dimerization protein 1 (Mxd1).